A 73-amino-acid polypeptide reads, in one-letter code: Neurotoxin Cex13 (73 aa).

An N-terminal signal peptide occupies residues Ala-1 to Ala-7. The LCN-type CS-alpha/beta domain maps to Lys-8–Gly-71. Disulfide bonds link Cys-19–Cys-70, Cys-23–Cys-46, Cys-32–Cys-51, and Cys-36–Cys-53. The residue at position 70 (Cys-70) is a Cysteine amide. Positions Gly-71 to Lys-73 are excised as a propeptide.

The protein belongs to the long (4 C-C) scorpion toxin superfamily. Sodium channel inhibitor family. Beta subfamily. As to expression, expressed by the venom gland.

The protein resides in the secreted. Functionally, beta toxins bind voltage-independently at site-4 of sodium channels (Nav) and shift the voltage of activation toward more negative potentials thereby affecting sodium channel activation and promoting spontaneous and repetitive firing. In Centruroides exilicauda (Bark scorpion), this protein is Neurotoxin Cex13.